The primary structure comprises 394 residues: Tubulin-like protein CetZ4 (394 aa).

GTP contacts are provided by residues 10–14 (QAGGK), 110–112 (GTG), glutamate 142, asparagine 169, and asparagine 187.

The protein belongs to the CetZ family.

It localises to the cytoplasm. Involved in cell shape control. The protein is Tubulin-like protein CetZ4 of Haloferax volcanii (strain ATCC 29605 / DSM 3757 / JCM 8879 / NBRC 14742 / NCIMB 2012 / VKM B-1768 / DS2) (Halobacterium volcanii).